Here is a 137-residue protein sequence, read N- to C-terminus: Probable Hsp20 family chaperone (137 aa).

The sHSP domain occupies 25–137 (LTNNNNIMKT…PKEKHYIKLN (113 aa)).

Belongs to the small heat shock protein (HSP20) family.

Its function is as follows. Probable chaperone. In Onion yellows phytoplasma (strain OY-M), this protein is Probable Hsp20 family chaperone.